Reading from the N-terminus, the 846-residue chain is MSTAAGSRKKHSKLHNEERADITKDEFEAIREALSKEEFRKLFFDYVEEVQDPENRKIYEQEITQLEKERGVDIKFVHPKPGFVVKTSIDGELKCFINIASSPEVARPNSEVGMNPETGGRGLSWSIPMAQTGGRDDCDAKNNHCKVFDVVFHPDALHLSTRDSQFRKALIDTALDAVEREYEVALDRANLKYPKLDYKGIARPTVIRKLAANPTPEEQEPHPLEHMYPTKPPASNSEPKILPMKTKAAPVPEFAVPKYSIKQSHDVDLSEYTDELDAKLHVTVPRSLVVEIELPLLRSTAECQLDVTAKSVYLLSERLGAKYRLKLDLPFVVDDKAGNARFDTEKRRLSITLPVVRKSVNQQRQMHDTLRYLSREDSGVELHSNSESPVEDDADGDMPETPELETAAPPDPPALTPSTFLKDSVHYQLPKFDCNALDNAMAFVLDVAHVQPDSIVTLKTDRSVSVKFATIGSGYYPTHYAFYMELPSVDMEEYHKDHCIESIEAEAWDNNVIMKLFLGAESKAPTSYLAGLHANGLKEYQVYGHYKAKTDKNNECEPNPPRVVQIMRTDDAVVITVRPPHTSITTEEDDEQQQQLHKKPSKKQRKRNKKQRSYSESACEEMLDQQDGPLGRKKDATTPMVPQRKQRSYSECNDSTIGSENVNRGILKRFSRYGPRPSMSDSCSSIDDCGFSSHSCSVDASSSLFSQSFNGIPEEDRTEEGLSESCKKTVRFNDQIMKQVFRHDSSILGQRKKNQKRRNCKLRAQQRRLSEGDSADYEETRDTALKQQGEPSGNKLHDSGLDLTGASASHRTDNNSKSYRTRQDHADADAKNDAMMFEMDDEDDEI.

Disordered stretches follow at residues 1–21 (MSTAAGSRKKHSKLHNEERAD), 372–416 (YLSR…PALT), 581–657 (HTSI…DSTI), and 743–846 (HDSS…DDEI). Ser-378 carries the phosphoserine modification. The segment covering 389-403 (PVEDDADGDMPETPE) has biased composition (acidic residues). Basic residues-rich tracts occupy residues 596–612 (LHKKPSKKQRKRNKKQR) and 750–766 (QRKKNQKRRNCKLRAQQ). The residue at position 770 (Ser-770) is a Phosphoserine. Residues 821–832 (TRQDHADADAKN) are compositionally biased toward basic and acidic residues.

This sequence belongs to the PIH1 family. Kintoun subfamily. In terms of assembly, interacts with Pp1alpha-96A, Pp1-87B, Pp1-13C and flw.

It localises to the cytoplasm. In terms of biological role, required for cytoplasmic pre-assembly of axonemal dyneins, thereby playing a central role in motility in cilia and flagella. Involved in pre-assembly of dynein arm complexes in the cytoplasm before intraflagellar transport loads them for the ciliary compartment. This chain is Protein kintoun, found in Drosophila persimilis (Fruit fly).